Reading from the N-terminus, the 94-residue chain is Co-chaperonin GroES (94 aa).

Belongs to the GroES chaperonin family. In terms of assembly, heptamer of 7 subunits arranged in a ring. Interacts with the chaperonin GroEL.

The protein localises to the cytoplasm. Functionally, together with the chaperonin GroEL, plays an essential role in assisting protein folding. The GroEL-GroES system forms a nano-cage that allows encapsulation of the non-native substrate proteins and provides a physical environment optimized to promote and accelerate protein folding. GroES binds to the apical surface of the GroEL ring, thereby capping the opening of the GroEL channel. This chain is Co-chaperonin GroES, found in Pediococcus pentosaceus (strain ATCC 25745 / CCUG 21536 / LMG 10740 / 183-1w).